The primary structure comprises 242 residues: Ribonuclease PH (242 aa).

Residues arginine 86 and 124–126 contribute to the phosphate site; that span reads GTR.

The protein belongs to the RNase PH family. As to quaternary structure, homohexameric ring arranged as a trimer of dimers.

The enzyme catalyses tRNA(n+1) + phosphate = tRNA(n) + a ribonucleoside 5'-diphosphate. In terms of biological role, phosphorolytic 3'-5' exoribonuclease that plays an important role in tRNA 3'-end maturation. Removes nucleotide residues following the 3'-CCA terminus of tRNAs; can also add nucleotides to the ends of RNA molecules by using nucleoside diphosphates as substrates, but this may not be physiologically important. Probably plays a role in initiation of 16S rRNA degradation (leading to ribosome degradation) during starvation. The protein is Ribonuclease PH of Caulobacter sp. (strain K31).